A 155-amino-acid polypeptide reads, in one-letter code: Endoribonuclease YbeY (155 aa).

The Zn(2+) site is built by His116, His120, and His126.

It belongs to the endoribonuclease YbeY family. Zn(2+) is required as a cofactor.

It is found in the cytoplasm. Its function is as follows. Single strand-specific metallo-endoribonuclease involved in late-stage 70S ribosome quality control and in maturation of the 3' terminus of the 16S rRNA. The chain is Endoribonuclease YbeY from Colwellia psychrerythraea (strain 34H / ATCC BAA-681) (Vibrio psychroerythus).